A 142-amino-acid polypeptide reads, in one-letter code: Hemoglobin subunit alpha (142 aa).

The Globin domain maps to 2-142; sequence VLSAADKTNV…VSTVLTSKYR (141 aa). The residue at position 4 (serine 4) is a Phosphoserine. Lysine 8 is subject to N6-succinyllysine. At threonine 9 the chain carries Phosphothreonine. Lysine 12 is modified (N6-succinyllysine). Lysine 17 carries the N6-acetyllysine; alternate modification. Lysine 17 carries the N6-succinyllysine; alternate modification. Position 41 is an N6-succinyllysine (lysine 41). The residue at position 50 (serine 50) is a Phosphoserine. Residue histidine 59 coordinates O2. Heme b is bound at residue histidine 88. Serine 103 bears the Phosphoserine mark. A Phosphothreonine modification is found at threonine 109. A phosphoserine mark is found at serine 125 and serine 132. 2 positions are modified to phosphothreonine: threonine 135 and threonine 138. The residue at position 139 (serine 139) is a Phosphoserine.

Belongs to the globin family. As to quaternary structure, heterotetramer of two alpha chains and two beta chains. Red blood cells.

Involved in oxygen transport from the lung to the various peripheral tissues. In terms of biological role, hemopressin acts as an antagonist peptide of the cannabinoid receptor CNR1. Hemopressin-binding efficiently blocks cannabinoid receptor CNR1 and subsequent signaling. This chain is Hemoglobin subunit alpha (HBA), found in Equus przewalskii (Przewalski's horse).